Here is a 65-residue protein sequence, read N- to C-terminus: MGAALKMTIFLLIVACAMIATTEAAVRIGPCDQVCPRIVPERHECCRAHGRSGYAYCSGGGMYCN.

An N-terminal signal peptide occupies residues 1-24; sequence MGAALKMTIFLLIVACAMIATTEA. 3 cysteine pairs are disulfide-bonded: C31–C45, C35–C57, and C46–C64.

Highly expressed in the fat body.

The protein resides in the secreted. Its function is as follows. Has antifungal activity against T.rubrum. Blocks voltage-dependent N-type calcium channels (Cav2.2 / CACNA1B). This Gastrophysa atrocyanea (Leaf beetle) protein is Diapause-specific peptide.